The sequence spans 436 residues: Enolase (436 aa).

(2R)-2-phosphoglycerate is bound at residue Gln167. Glu209 serves as the catalytic Proton donor. The Mg(2+) site is built by Asp246, Glu291, and Asp318. Residues Lys343, Arg372, Ser373, and Lys394 each coordinate (2R)-2-phosphoglycerate. The active-site Proton acceptor is the Lys343.

It belongs to the enolase family. In terms of assembly, component of the RNA degradosome, a multiprotein complex involved in RNA processing and mRNA degradation. Requires Mg(2+) as cofactor.

The protein resides in the cytoplasm. It localises to the secreted. It is found in the cell surface. The catalysed reaction is (2R)-2-phosphoglycerate = phosphoenolpyruvate + H2O. The protein operates within carbohydrate degradation; glycolysis; pyruvate from D-glyceraldehyde 3-phosphate: step 4/5. Catalyzes the reversible conversion of 2-phosphoglycerate (2-PG) into phosphoenolpyruvate (PEP). It is essential for the degradation of carbohydrates via glycolysis. The chain is Enolase from Actinobacillus pleuropneumoniae serotype 5b (strain L20).